We begin with the raw amino-acid sequence, 267 residues long: Indole-3-glycerol phosphate synthase (267 aa).

Belongs to the TrpC family.

It carries out the reaction 1-(2-carboxyphenylamino)-1-deoxy-D-ribulose 5-phosphate + H(+) = (1S,2R)-1-C-(indol-3-yl)glycerol 3-phosphate + CO2 + H2O. Its pathway is amino-acid biosynthesis; L-tryptophan biosynthesis; L-tryptophan from chorismate: step 4/5. The polypeptide is Indole-3-glycerol phosphate synthase (Cupriavidus pinatubonensis (strain JMP 134 / LMG 1197) (Cupriavidus necator (strain JMP 134))).